The chain runs to 128 residues: Fluoride-specific ion channel FluC (128 aa).

Transmembrane regions (helical) follow at residues 5–25, 35–55, 67–87, and 96–116; these read IVAI…LSIG, LGTL…VVAF, LFVI…SVEV, and FGWA…LTGL. Na(+) contacts are provided by Gly75 and Thr78.

The protein belongs to the fluoride channel Fluc/FEX (TC 1.A.43) family.

The protein localises to the cell inner membrane. The enzyme catalyses fluoride(in) = fluoride(out). With respect to regulation, na(+) is not transported, but it plays an essential structural role and its presence is essential for fluoride channel function. In terms of biological role, fluoride-specific ion channel. Important for reducing fluoride concentration in the cell, thus reducing its toxicity. This chain is Fluoride-specific ion channel FluC, found in Burkholderia thailandensis (strain ATCC 700388 / DSM 13276 / CCUG 48851 / CIP 106301 / E264).